The primary structure comprises 526 residues: Cholesterol side-chain cleavage enzyme, mitochondrial (526 aa).

The transit peptide at 1 to 36 (MLAKGLCLRSVLVKSCQPFLSPVWQGPGLATGNGAG) directs the protein to the mitochondrion. C459 lines the heme pocket.

This sequence belongs to the cytochrome P450 family. Interacts with FDX1/adrenodoxin. Requires heme as cofactor. In terms of tissue distribution, expressed in the kidney where it localizes to the distal convoluted tubule and the thick ascending limb of the loop of Henle (at protein level). In the ovary, highly expressed in interstitial cells (at protein level). Also expressed in adrenal gland and testis.

Its subcellular location is the mitochondrion inner membrane. It carries out the reaction 6 reduced [adrenodoxin] + cholesterol + 3 O2 + 6 H(+) = 4-methylpentanal + pregnenolone + 6 oxidized [adrenodoxin] + 4 H2O. The catalysed reaction is 2 reduced [adrenodoxin] + cholesterol + O2 + 2 H(+) = (22R)-hydroxycholesterol + 2 oxidized [adrenodoxin] + H2O. It catalyses the reaction (22R)-hydroxycholesterol + 2 reduced [adrenodoxin] + O2 + 2 H(+) = (20R,22R)-20,22-dihydroxycholesterol + 2 oxidized [adrenodoxin] + H2O. The enzyme catalyses (20R,22R)-20,22-dihydroxycholesterol + 2 reduced [adrenodoxin] + O2 + 2 H(+) = 4-methylpentanal + pregnenolone + 2 oxidized [adrenodoxin] + 2 H2O. It participates in lipid metabolism; C21-steroid hormone metabolism. Its pathway is steroid metabolism; cholesterol metabolism. Its function is as follows. A cytochrome P450 monooxygenase that catalyzes the side-chain hydroxylation and cleavage of cholesterol to pregnenolone, the precursor of most steroid hormones. Catalyzes three sequential oxidation reactions of cholesterol, namely the hydroxylation at C22 followed with the hydroxylation at C20 to yield 20R,22R-hydroxycholesterol that is further cleaved between C20 and C22 to yield the C21-steroid pregnenolone and 4-methylpentanal. Mechanistically, uses molecular oxygen inserting one oxygen atom into a substrate and reducing the second into a water molecule. Two electrons are provided by NADPH via a two-protein mitochondrial transfer system comprising flavoprotein FDXR (adrenodoxin/ferredoxin reductase) and nonheme iron-sulfur protein FDX1 or FDX2 (adrenodoxin/ferredoxin). This Rattus norvegicus (Rat) protein is Cholesterol side-chain cleavage enzyme, mitochondrial.